A 236-amino-acid polypeptide reads, in one-letter code: tRNA1(Val) (adenine(37)-N6)-methyltransferase (236 aa).

The protein belongs to the methyltransferase superfamily. tRNA (adenine-N(6)-)-methyltransferase family.

It localises to the cytoplasm. It catalyses the reaction adenosine(37) in tRNA1(Val) + S-adenosyl-L-methionine = N(6)-methyladenosine(37) in tRNA1(Val) + S-adenosyl-L-homocysteine + H(+). Its function is as follows. Specifically methylates the adenine in position 37 of tRNA(1)(Val) (anticodon cmo5UAC). This is tRNA1(Val) (adenine(37)-N6)-methyltransferase from Shewanella sp. (strain MR-7).